A 317-amino-acid chain; its full sequence is DNA-directed RNA polymerase subunit alpha 2 (317 aa).

The alpha N-terminal domain (alpha-NTD) stretch occupies residues 1–227 (MALENLLHPT…NQLRNIVDIE (227 aa)). An alpha C-terminal domain (alpha-CTD) region spans residues 241–317 (INPILLKHVE…TLIENWPQDL (77 aa)).

The protein belongs to the RNA polymerase alpha chain family. Homodimer. The RNAP catalytic core consists of 2 alpha, 1 beta, 1 beta' and 1 omega subunit. When a sigma factor is associated with the core the holoenzyme is formed, which can initiate transcription.

The catalysed reaction is RNA(n) + a ribonucleoside 5'-triphosphate = RNA(n+1) + diphosphate. In terms of biological role, DNA-dependent RNA polymerase catalyzes the transcription of DNA into RNA using the four ribonucleoside triphosphates as substrates. This chain is DNA-directed RNA polymerase subunit alpha 2, found in Francisella tularensis subsp. holarctica (strain LVS).